Reading from the N-terminus, the 79-residue chain is Sec-independent protein translocase protein TatA (79 aa).

The helical transmembrane segment at 1 to 21 (MGGLQPWHWVIVIAVFVLLFG) threads the bilayer. Over residues 43–52 (IKEMQSEGKS) the composition is skewed to basic and acidic residues. Residues 43 to 79 (IKEMQSEGKSDNPPATPITSERVDTNPTAEQPDKRSA) form a disordered region.

It belongs to the TatA/E family. The Tat system comprises two distinct complexes: a TatABC complex, containing multiple copies of TatA, TatB and TatC subunits, and a separate TatA complex, containing only TatA subunits. Substrates initially bind to the TatABC complex, which probably triggers association of the separate TatA complex to form the active translocon.

It localises to the cell membrane. Functionally, part of the twin-arginine translocation (Tat) system that transports large folded proteins containing a characteristic twin-arginine motif in their signal peptide across membranes. TatA could form the protein-conducting channel of the Tat system. The protein is Sec-independent protein translocase protein TatA of Mycobacterium sp. (strain JLS).